Consider the following 362-residue polypeptide: Probable dual-specificity RNA methyltransferase RlmN (362 aa).

E105 functions as the Proton acceptor in the catalytic mechanism. The Radical SAM core domain maps to 111 to 344 (HEYGNSICVT…VTIRREQGHD (234 aa)). The cysteines at positions 118 and 349 are disulfide-linked. C125, C129, and C132 together coordinate [4Fe-4S] cluster. S-adenosyl-L-methionine is bound by residues 175-176 (GE), S207, 230-232 (SLH), and N306. C349 serves as the catalytic S-methylcysteine intermediate.

The protein belongs to the radical SAM superfamily. RlmN family. [4Fe-4S] cluster is required as a cofactor.

The protein resides in the cytoplasm. The catalysed reaction is adenosine(2503) in 23S rRNA + 2 reduced [2Fe-2S]-[ferredoxin] + 2 S-adenosyl-L-methionine = 2-methyladenosine(2503) in 23S rRNA + 5'-deoxyadenosine + L-methionine + 2 oxidized [2Fe-2S]-[ferredoxin] + S-adenosyl-L-homocysteine. The enzyme catalyses adenosine(37) in tRNA + 2 reduced [2Fe-2S]-[ferredoxin] + 2 S-adenosyl-L-methionine = 2-methyladenosine(37) in tRNA + 5'-deoxyadenosine + L-methionine + 2 oxidized [2Fe-2S]-[ferredoxin] + S-adenosyl-L-homocysteine. Specifically methylates position 2 of adenine 2503 in 23S rRNA and position 2 of adenine 37 in tRNAs. The chain is Probable dual-specificity RNA methyltransferase RlmN from Bacillus cytotoxicus (strain DSM 22905 / CIP 110041 / 391-98 / NVH 391-98).